A 130-amino-acid chain; its full sequence is Small ribosomal subunit protein uS8 (130 aa).

This sequence belongs to the universal ribosomal protein uS8 family. In terms of assembly, part of the 30S ribosomal subunit. Contacts proteins S5 and S12.

Functionally, one of the primary rRNA binding proteins, it binds directly to 16S rRNA central domain where it helps coordinate assembly of the platform of the 30S subunit. This is Small ribosomal subunit protein uS8 from Proteus mirabilis (strain HI4320).